A 226-amino-acid polypeptide reads, in one-letter code: Fibrillarin-like rRNA/tRNA 2'-O-methyltransferase (226 aa).

S-adenosyl-L-methionine-binding positions include 85–86 (TT), 104–105 (EF), 129–130 (DA), and 149–152 (DVAQ).

Belongs to the methyltransferase superfamily. Fibrillarin family. As to quaternary structure, interacts with nop5. Component of box C/D small ribonucleoprotein (sRNP) particles that contain rpl7ae, FlpA and nop5, plus a guide RNA.

In terms of biological role, involved in pre-rRNA and tRNA processing. Utilizes the methyl donor S-adenosyl-L-methionine to catalyze the site-specific 2'-hydroxyl methylation of ribose moieties in rRNA and tRNA. Site specificity is provided by a guide RNA that base pairs with the substrate. Methylation occurs at a characteristic distance from the sequence involved in base pairing with the guide RNA. This chain is Fibrillarin-like rRNA/tRNA 2'-O-methyltransferase, found in Thermococcus sibiricus (strain DSM 12597 / MM 739).